A 90-amino-acid chain; its full sequence is MGSMSIWHWVIVAVIVMLLFGRGKVSDLMGDVAKGIKAFKKGMAEDETPPAVQAAPPPAEPVRTIPHATETSPGTAIPASHLPGGERKPV.

A helical membrane pass occupies residues 1–21 (MGSMSIWHWVIVAVIVMLLFG). The segment at 44 to 90 (AEDETPPAVQAAPPPAEPVRTIPHATETSPGTAIPASHLPGGERKPV) is disordered.

It belongs to the TatA/E family. In terms of assembly, the Tat system comprises two distinct complexes: a TatABC complex, containing multiple copies of TatA, TatB and TatC subunits, and a separate TatA complex, containing only TatA subunits. Substrates initially bind to the TatABC complex, which probably triggers association of the separate TatA complex to form the active translocon.

It localises to the cell inner membrane. Part of the twin-arginine translocation (Tat) system that transports large folded proteins containing a characteristic twin-arginine motif in their signal peptide across membranes. TatA could form the protein-conducting channel of the Tat system. This chain is Sec-independent protein translocase protein TatA, found in Methylobacterium radiotolerans (strain ATCC 27329 / DSM 1819 / JCM 2831 / NBRC 15690 / NCIMB 10815 / 0-1).